The chain runs to 714 residues: Fatty acid oxidation complex subunit alpha (714 aa).

The segment at 1-190 is enoyl-CoA hydratase; that stretch reads MDTVSAFKLE…KAGLVDEVVP (190 aa). A 3-hydroxyacyl-CoA dehydrogenase region spans residues 306–714; sequence GPLTSIAVLG…TFWPADERLT (409 aa).

It in the N-terminal section; belongs to the enoyl-CoA hydratase/isomerase family. This sequence in the central section; belongs to the 3-hydroxyacyl-CoA dehydrogenase family. Heterotetramer of two alpha chains (FadJ) and two beta chains (FadI).

It localises to the cytoplasm. The enzyme catalyses a (3S)-3-hydroxyacyl-CoA = a (2E)-enoyl-CoA + H2O. It carries out the reaction a 4-saturated-(3S)-3-hydroxyacyl-CoA = a (3E)-enoyl-CoA + H2O. The catalysed reaction is a (3S)-3-hydroxyacyl-CoA + NAD(+) = a 3-oxoacyl-CoA + NADH + H(+). It catalyses the reaction (3S)-3-hydroxybutanoyl-CoA = (3R)-3-hydroxybutanoyl-CoA. The protein operates within lipid metabolism; fatty acid beta-oxidation. Its function is as follows. Catalyzes the formation of a hydroxyacyl-CoA by addition of water on enoyl-CoA. Also exhibits 3-hydroxyacyl-CoA epimerase and 3-hydroxyacyl-CoA dehydrogenase activities. The chain is Fatty acid oxidation complex subunit alpha from Klebsiella pneumoniae (strain 342).